The primary structure comprises 249 residues: MQWSDQAIILGIRRHGESSVIAEVMTPGHGRHLGLVRSGRSRAMQPVLQPGNSVEVVWRARLDEHLGEFRVEPLQLRAARLIETATSVYGIQALGSLLRLLPERDPHPHLYEALAVIVDHLQDPADAGELFVRFELAVLNDLGFGLDLSRCGATGARSELVYVSPKSGRAICREAGAPYAERMLALPDFLSGQNRAADHESLAAAFRLTAYFLNRHVYEPRGVDAASARDGFVHATLKALRTASSEAPQ.

This sequence belongs to the RecO family.

Functionally, involved in DNA repair and RecF pathway recombination. This is DNA repair protein RecO from Sinorhizobium medicae (strain WSM419) (Ensifer medicae).